A 782-amino-acid chain; its full sequence is Endonuclease MutS2 (782 aa).

An ATP-binding site is contributed by 336–343 (GPNTGGKT). The Smr domain occupies 707–782 (LDLRGYRYED…GFGVTVATLK (76 aa)).

The protein belongs to the DNA mismatch repair MutS family. MutS2 subfamily. As to quaternary structure, homodimer. Binds to stalled ribosomes, contacting rRNA.

Endonuclease that is involved in the suppression of homologous recombination and thus may have a key role in the control of bacterial genetic diversity. In terms of biological role, acts as a ribosome collision sensor, splitting the ribosome into its 2 subunits. Detects stalled/collided 70S ribosomes which it binds and splits by an ATP-hydrolysis driven conformational change. Acts upstream of the ribosome quality control system (RQC), a ribosome-associated complex that mediates the extraction of incompletely synthesized nascent chains from stalled ribosomes and their subsequent degradation. Probably generates substrates for RQC. The chain is Endonuclease MutS2 from Staphylococcus aureus (strain bovine RF122 / ET3-1).